A 436-amino-acid polypeptide reads, in one-letter code: Anaerobic glycerol-3-phosphate dehydrogenase subunit B (436 aa).

Belongs to the anaerobic G-3-P dehydrogenase subunit B family. As to quaternary structure, composed of a catalytic GlpA/B dimer and of membrane bound GlpC. Requires FMN as cofactor.

It carries out the reaction a quinone + sn-glycerol 3-phosphate = dihydroxyacetone phosphate + a quinol. It participates in polyol metabolism; glycerol degradation via glycerol kinase pathway; glycerone phosphate from sn-glycerol 3-phosphate (anaerobic route): step 1/1. Conversion of glycerol 3-phosphate to dihydroxyacetone. Uses fumarate or nitrate as electron acceptor. The chain is Anaerobic glycerol-3-phosphate dehydrogenase subunit B from Vibrio cholerae serotype O1 (strain ATCC 39315 / El Tor Inaba N16961).